Consider the following 228-residue polypeptide: ATP-dependent dethiobiotin synthetase BioD (228 aa).

13-18 (DIGKTF) serves as a coordination point for ATP. Mg(2+) is bound at residue T17. The active site involves K38. S42 serves as a coordination point for substrate. Residues D55, 116 to 119 (EGSG), 179 to 180 (NK), and 208 to 210 (PKI) each bind ATP. Mg(2+) is bound by residues D55 and E116.

This sequence belongs to the dethiobiotin synthetase family. Homodimer. Requires Mg(2+) as cofactor.

It is found in the cytoplasm. The enzyme catalyses (7R,8S)-7,8-diammoniononanoate + CO2 + ATP = (4R,5S)-dethiobiotin + ADP + phosphate + 3 H(+). It functions in the pathway cofactor biosynthesis; biotin biosynthesis; biotin from 7,8-diaminononanoate: step 1/2. In terms of biological role, catalyzes a mechanistically unusual reaction, the ATP-dependent insertion of CO2 between the N7 and N8 nitrogen atoms of 7,8-diaminopelargonic acid (DAPA, also called 7,8-diammoniononanoate) to form a ureido ring. The polypeptide is ATP-dependent dethiobiotin synthetase BioD (Clostridium perfringens (strain ATCC 13124 / DSM 756 / JCM 1290 / NCIMB 6125 / NCTC 8237 / Type A)).